A 165-amino-acid chain; its full sequence is Putative defense protein Hdd11 (165 aa).

A signal peptide spans 1 to 17 (MWATYVFIAVSLACANG). In terms of domain architecture, Reelin spans 18–165 (YSSGAPESVC…VESGPVKVIS (148 aa)). A disulfide bridge connects residues cysteine 27 and cysteine 104.

It belongs to the insect defense protein family.

It is found in the secreted. Functionally, as this protein is expressed upon bacterial infection, it may have antimicrobial activity. The polypeptide is Putative defense protein Hdd11 (Hyphantria cunea (Fall webworm moth)).